The following is a 194-amino-acid chain: Molybdenum cofactor guanylyltransferase (194 aa).

GTP contacts are provided by residues Leu-12–Gly-14, Lys-25, Asn-53, Asp-70, and Asp-100. Residue Asp-100 participates in Mg(2+) binding.

The protein belongs to the MobA family. Monomer. Mg(2+) is required as a cofactor.

The protein resides in the cytoplasm. It catalyses the reaction Mo-molybdopterin + GTP + H(+) = Mo-molybdopterin guanine dinucleotide + diphosphate. Transfers a GMP moiety from GTP to Mo-molybdopterin (Mo-MPT) cofactor (Moco or molybdenum cofactor) to form Mo-molybdopterin guanine dinucleotide (Mo-MGD) cofactor. This chain is Molybdenum cofactor guanylyltransferase, found in Vibrio atlanticus (strain LGP32) (Vibrio splendidus (strain Mel32)).